Here is a 76-residue protein sequence, read N- to C-terminus: Acyl carrier protein (76 aa).

Residues 1–76 (MALLDDVKAV…DAIKYIENNA (76 aa)) form the Carrier domain. At Ser-36 the chain carries O-(pantetheine 4'-phosphoryl)serine.

It belongs to the acyl carrier protein (ACP) family. 4'-phosphopantetheine is transferred from CoA to a specific serine of apo-ACP by AcpS. This modification is essential for activity because fatty acids are bound in thioester linkage to the sulfhydryl of the prosthetic group.

The protein localises to the cytoplasm. It functions in the pathway lipid metabolism; fatty acid biosynthesis. Functionally, carrier of the growing fatty acid chain in fatty acid biosynthesis. This chain is Acyl carrier protein, found in Aliarcobacter butzleri (strain RM4018) (Arcobacter butzleri).